A 1375-amino-acid chain; its full sequence is DNA-directed RNA polymerase subunit beta (1375 aa).

Belongs to the RNA polymerase beta chain family. As to quaternary structure, the RNAP catalytic core consists of 2 alpha, 1 beta, 1 beta' and 1 omega subunit. When a sigma factor is associated with the core the holoenzyme is formed, which can initiate transcription.

It catalyses the reaction RNA(n) + a ribonucleoside 5'-triphosphate = RNA(n+1) + diphosphate. DNA-dependent RNA polymerase catalyzes the transcription of DNA into RNA using the four ribonucleoside triphosphates as substrates. The sequence is that of DNA-directed RNA polymerase subunit beta from Campylobacter jejuni subsp. jejuni serotype O:6 (strain 81116 / NCTC 11828).